We begin with the raw amino-acid sequence, 339 residues long: Fructose-1,6-bisphosphatase isozyme 2 (339 aa).

Residues 3–10 form an important for interaction with ALDOA region; that stretch reads DRSPFETD. AMP-binding positions include valine 18 and 28–32; that span reads TGELT. 2 residues coordinate Mg(2+): aspartate 69 and glutamate 98. 113–114 contacts AMP; the sequence is KY. Residues aspartate 119, leucine 121, and aspartate 122 each coordinate Mg(2+). Aspartate 122 contributes to the substrate binding site. An AMP-binding site is contributed by arginine 141. Positions 204–208 match the Nuclear localization signal motif; that stretch reads KKKGK. 213 to 216 lines the substrate pocket; the sequence is NEGY. Tyrosine 216 and tyrosine 219 each carry phosphotyrosine. Substrate is bound by residues 245–249, tyrosine 265, and lysine 275; that span reads YVGSM. Mg(2+) is bound at residue glutamate 281.

Belongs to the FBPase class 1 family. In terms of assembly, homotetramer. Interacts with ALDOA; the interaction blocks inhibition by physiological concentrations of AMP and reduces inhibition by Ca(2+). Interacts with alpha-actinin and F-actin. It depends on Mg(2+) as a cofactor.

It is found in the cell junction. The protein resides in the cytoplasm. The protein localises to the nucleus. It localises to the myofibril. Its subcellular location is the sarcomere. It is found in the z line. The catalysed reaction is beta-D-fructose 1,6-bisphosphate + H2O = beta-D-fructose 6-phosphate + phosphate. Its pathway is carbohydrate biosynthesis; gluconeogenesis. Its activity is regulated as follows. Subject to complex allosteric regulation. The enzyme can assume an active R-state, or an inactive T-state. Intermediate conformations may exist. AMP acts as an allosteric inhibitor. Fructose 2,6-bisphosphate acts as a competitive inhibitor. Strongly inhibited by Ca(2+). Catalyzes the hydrolysis of fructose 1,6-bisphosphate to fructose 6-phosphate in the presence of divalent cations and probably participates in glycogen synthesis from carbohydrate precursors, such as lactate. The polypeptide is Fructose-1,6-bisphosphatase isozyme 2 (Fbp2) (Rattus norvegicus (Rat)).